A 254-amino-acid chain; its full sequence is Hydroxyacylglutathione hydrolase (254 aa).

Zn(2+) contacts are provided by His54, His56, Asp58, His59, His111, Asp130, and His168.

This sequence belongs to the metallo-beta-lactamase superfamily. Glyoxalase II family. In terms of assembly, monomer. The cofactor is Zn(2+).

It catalyses the reaction an S-(2-hydroxyacyl)glutathione + H2O = a 2-hydroxy carboxylate + glutathione + H(+). It participates in secondary metabolite metabolism; methylglyoxal degradation; (R)-lactate from methylglyoxal: step 2/2. Its function is as follows. Thiolesterase that catalyzes the hydrolysis of S-D-lactoyl-glutathione to form glutathione and D-lactic acid. The protein is Hydroxyacylglutathione hydrolase of Legionella pneumophila (strain Paris).